Reading from the N-terminus, the 813-residue chain is LPS-assembly protein LptD (813 aa).

Positions 1–22 (MRRALRLLPLPLSIAICLPAMA) are cleaved as a signal peptide.

Belongs to the LptD family. Component of the lipopolysaccharide transport and assembly complex. Interacts with LptE and LptA.

The protein localises to the cell outer membrane. In terms of biological role, together with LptE, is involved in the assembly of lipopolysaccharide (LPS) at the surface of the outer membrane. The sequence is that of LPS-assembly protein LptD from Xanthomonas oryzae pv. oryzae (strain KACC10331 / KXO85).